The following is a 1420-amino-acid chain: DNA-directed RNA polymerase subunit beta' (1420 aa).

Zn(2+) is bound by residues Cys70, Cys72, Cys85, and Cys88. Mg(2+) is bound by residues Asp464, Asp466, and Asp468. Positions 823, 897, 904, and 907 each coordinate Zn(2+).

The protein belongs to the RNA polymerase beta' chain family. The RNAP catalytic core consists of 2 alpha, 1 beta, 1 beta' and 1 omega subunit. When a sigma factor is associated with the core the holoenzyme is formed, which can initiate transcription. Mg(2+) is required as a cofactor. It depends on Zn(2+) as a cofactor.

It carries out the reaction RNA(n) + a ribonucleoside 5'-triphosphate = RNA(n+1) + diphosphate. In terms of biological role, DNA-dependent RNA polymerase catalyzes the transcription of DNA into RNA using the four ribonucleoside triphosphates as substrates. This is DNA-directed RNA polymerase subunit beta' from Polynucleobacter necessarius subsp. necessarius (strain STIR1).